The primary structure comprises 154 residues: uncharacterized protein (154 aa).

This is an uncharacterized protein from Methanocaldococcus jannaschii (strain ATCC 43067 / DSM 2661 / JAL-1 / JCM 10045 / NBRC 100440) (Methanococcus jannaschii).